Here is an 85-residue protein sequence, read N- to C-terminus: Kappa-theraphotoxin-Gr1a (85 aa).

Residues 1–21 form the signal peptide; the sequence is MKTSVFAAILGLALFAVLCSG. The propeptide occupies 22–49; that stretch reads SELQEKDLKETLLSAIMETALEAQPEER. 3 disulfides stabilise this stretch: Cys51–Cys65, Cys58–Cys70, and Cys64–Cys77. Positions 53–55 are involved in active face; the sequence is YLF.

The protein belongs to the neurotoxin 10 (Hwtx-1) family. 09 (HaTx) subfamily. In terms of tissue distribution, expressed by the venom gland.

Its subcellular location is the secreted. Inhibits Kv2.1/KCNB1 and Kv4.2/KCND2 voltage-gated potassium channels. Acts as a gating modifier by shifting channel openings to more depolarized voltages and acts via the occupancy of multiple binding sites on the channel. The toxin binding sites are situated on the S3-S4 extracellular linker of the channel. At least two hanatoxin molecules can occupy the Kv2.1/KCNB1 channel, and maybe more (three or four). Can also inhibit calcium channels (Cav2.1/CACNA1A). Needs to partition into the membrane in order to bind to the channel. This is Kappa-theraphotoxin-Gr1a from Grammostola rosea (Chilean rose tarantula).